A 141-amino-acid polypeptide reads, in one-letter code: MAKKLVAVVKLQLPAGKATPAPPVGPALGQYGINIMAFVKEYNEKSASQAGSIVPVEISVYSDRSFVARLLTPPAADLLRKAAGIQKGASTPKRTTVGTITRAQLRQIAQQKLPDMNANDIEAAERIIAGTARSMGIKIVE.

It belongs to the universal ribosomal protein uL11 family. As to quaternary structure, part of the ribosomal stalk of the 50S ribosomal subunit. Interacts with L10 and the large rRNA to form the base of the stalk. L10 forms an elongated spine to which L12 dimers bind in a sequential fashion forming a multimeric L10(L12)X complex. In terms of processing, one or more lysine residues are methylated.

Its function is as follows. Forms part of the ribosomal stalk which helps the ribosome interact with GTP-bound translation factors. In Chloroflexus aurantiacus (strain ATCC 29366 / DSM 635 / J-10-fl), this protein is Large ribosomal subunit protein uL11.